A 285-amino-acid chain; its full sequence is Undecaprenyl-diphosphatase (285 aa).

A run of 7 helical transmembrane segments spans residues 3-23 (ILLL…EFLP), 41-61 (GEIV…AVIW), 87-107 (LLIA…LIKE), 109-129 (LFHP…ILWV), 197-217 (TEFS…YSLI), 226-246 (GDLP…LVCI), and 260-280 (VFAW…WGGW).

It belongs to the UppP family.

It localises to the cell inner membrane. The catalysed reaction is di-trans,octa-cis-undecaprenyl diphosphate + H2O = di-trans,octa-cis-undecaprenyl phosphate + phosphate + H(+). Its function is as follows. Catalyzes the dephosphorylation of undecaprenyl diphosphate (UPP). Confers resistance to bacitracin. The sequence is that of Undecaprenyl-diphosphatase from Methylibium petroleiphilum (strain ATCC BAA-1232 / LMG 22953 / PM1).